Consider the following 32-residue polypeptide: Natriuretic peptide Coa_NP2 (32 aa).

An intrachain disulfide couples Cys8 to Cys24.

This sequence belongs to the natriuretic peptide family. Snake NP subfamily. Expressed by the venom gland.

It is found in the secreted. Its function is as follows. Snake venom natriuretic peptide that exhibits hypotensive and vasorelaxant effects. Produces a dose-dependent hypotension in rats, followed by significant increases in concentrations of markers of nitric oxide (NO) formation measured in the plasma and vasorelaxation in a thoracic aortic ring bath. The peptide may exert its hypotensive action, at least in part, through stimulation of NO production. The vasorelaxant effect is endothelium-dependent and does not appear to be mediated by the natriuretic peptide receptor-A, as its action is not modified by isatin (a potent NPR1 antagonist). May act by activating the natriuretic peptide receptor-B (NPR2). This chain is Natriuretic peptide Coa_NP2, found in Crotalus lutosus abyssus (Grand Canyon rattlesnake).